A 329-amino-acid chain; its full sequence is 3'-5' exonuclease (329 aa).

Positions 26–88 (EEKPKPKKVV…MADVGTPSPE (63 aa)) are disordered. Residues 46-65 (KNLDTPEIVNKENAEVENPP) are compositionally biased toward basic and acidic residues. Residues serine 78 and serine 86 each carry the phosphoserine modification. Residues 130–288 (TEIVPMAFDM…IGQVIYREIE (159 aa)) enclose the 3'-5' exonuclease domain. Mg(2+) contacts are provided by aspartate 138, glutamate 140, and aspartate 276.

It belongs to the WRNexo family.

The protein localises to the nucleus. Has exonuclease activity on both single-stranded and duplex templates bearing overhangs, but not blunt ended duplex DNA, and cleaves in a 3'-5' direction. Essential for the formation of DNA replication focal centers. Has an important role in maintaining genome stability. The polypeptide is 3'-5' exonuclease (Drosophila mojavensis (Fruit fly)).